A 394-amino-acid polypeptide reads, in one-letter code: NAD(P)H-quinone oxidoreductase subunit H (394 aa).

Belongs to the complex I 49 kDa subunit family. In terms of assembly, NDH-1 can be composed of about 15 different subunits; different subcomplexes with different compositions have been identified which probably have different functions.

It is found in the cellular thylakoid membrane. It catalyses the reaction a plastoquinone + NADH + (n+1) H(+)(in) = a plastoquinol + NAD(+) + n H(+)(out). The catalysed reaction is a plastoquinone + NADPH + (n+1) H(+)(in) = a plastoquinol + NADP(+) + n H(+)(out). Functionally, NDH-1 shuttles electrons from an unknown electron donor, via FMN and iron-sulfur (Fe-S) centers, to quinones in the respiratory and/or the photosynthetic chain. The immediate electron acceptor for the enzyme in this species is believed to be plastoquinone. Couples the redox reaction to proton translocation, and thus conserves the redox energy in a proton gradient. Cyanobacterial NDH-1 also plays a role in inorganic carbon-concentration. This is NAD(P)H-quinone oxidoreductase subunit H from Prochlorococcus marinus (strain NATL2A).